The sequence spans 293 residues: 3-methyl-2-oxobutanoate hydroxymethyltransferase (293 aa).

Positions 1-25 (MTDSPTAGTPYGTLPPASPLPQRRP) are disordered. Residues Asp-67 and Asp-110 each coordinate Mg(2+). 3-methyl-2-oxobutanoate contacts are provided by residues 67–68 (DS), Asp-110, and Lys-139. Glu-141 is a Mg(2+) binding site. The Proton acceptor role is filled by Glu-208.

This sequence belongs to the PanB family. In terms of assembly, homodecamer; pentamer of dimers. The cofactor is Mg(2+).

It localises to the cytoplasm. The catalysed reaction is 3-methyl-2-oxobutanoate + (6R)-5,10-methylene-5,6,7,8-tetrahydrofolate + H2O = 2-dehydropantoate + (6S)-5,6,7,8-tetrahydrofolate. It functions in the pathway cofactor biosynthesis; (R)-pantothenate biosynthesis; (R)-pantoate from 3-methyl-2-oxobutanoate: step 1/2. In terms of biological role, catalyzes the reversible reaction in which hydroxymethyl group from 5,10-methylenetetrahydrofolate is transferred onto alpha-ketoisovalerate to form ketopantoate. This Acidovorax sp. (strain JS42) protein is 3-methyl-2-oxobutanoate hydroxymethyltransferase.